The chain runs to 209 residues: Pyroglutamyl-peptidase 1 (209 aa).

Residues E85, C149, and H168 contribute to the active site.

Belongs to the peptidase C15 family. Monomer.

The protein resides in the cytoplasm. The enzyme catalyses Release of an N-terminal pyroglutamyl group from a polypeptide, the second amino acid generally not being Pro.. In terms of biological role, removes 5-oxoproline from various penultimate amino acid residues except L-proline. The polypeptide is Pyroglutamyl-peptidase 1 (Pgpep1) (Rattus norvegicus (Rat)).